The chain runs to 258 residues: Tryptophan synthase alpha chain (258 aa).

Active-site proton acceptor residues include E52 and D63.

The protein belongs to the TrpA family. In terms of assembly, tetramer of two alpha and two beta chains.

The enzyme catalyses (1S,2R)-1-C-(indol-3-yl)glycerol 3-phosphate + L-serine = D-glyceraldehyde 3-phosphate + L-tryptophan + H2O. It participates in amino-acid biosynthesis; L-tryptophan biosynthesis; L-tryptophan from chorismate: step 5/5. Functionally, the alpha subunit is responsible for the aldol cleavage of indoleglycerol phosphate to indole and glyceraldehyde 3-phosphate. The protein is Tryptophan synthase alpha chain of Streptococcus pneumoniae serotype 19F (strain G54).